Reading from the N-terminus, the 659-residue chain is Alpha-galactosidase D (659 aa).

An N-terminal signal peptide occupies residues 1–20 (MRALVPMVVAATALASPAPA). N-linked (GlcNAc...) asparagine glycosylation is found at Asn-48, Asn-86, and Asn-130. A disulfide bridge links Cys-125 with Cys-158. Asp-156 serves as the catalytic Nucleophile. A glycan (N-linked (GlcNAc...) asparagine) is linked at Asn-183. 201–205 (EWGID) serves as a coordination point for substrate. Catalysis depends on Asp-223, which acts as the Proton donor. Residues Asn-438, Asn-450, Asn-484, Asn-551, and Asn-583 are each glycosylated (N-linked (GlcNAc...) asparagine).

Belongs to the glycosyl hydrolase 27 family.

It is found in the secreted. It carries out the reaction Hydrolysis of terminal, non-reducing alpha-D-galactose residues in alpha-D-galactosides, including galactose oligosaccharides, galactomannans and galactolipids.. In terms of biological role, hydrolyzes a variety of simple alpha-D-galactoside as well as more complex molecules such as oligosaccharides and polysaccharides. Active on paranitrophenyl-alpha-galactoside but not on raffinose, locust bean gum and gum guar. The sequence is that of Alpha-galactosidase D (aglD) from Emericella nidulans (strain FGSC A4 / ATCC 38163 / CBS 112.46 / NRRL 194 / M139) (Aspergillus nidulans).